We begin with the raw amino-acid sequence, 452 residues long: Zinc finger protein 672 (452 aa).

4 C2H2-type zinc fingers span residues 14 to 36, 42 to 64, 70 to 92, and 99 to 122; these read YSCS…ERAH, FRCL…RRTH, YICS…LGAH, and CPCR…RRQH. The C2H2-type 5; degenerate zinc finger occupies 128 to 150; the sequence is RRCPLCARTFRQSALLFHQARAH. 9 consecutive C2H2-type zinc fingers follow at residues 163-185, 199-221, 227-249, 255-277, 283-305, 311-333, 339-361, 367-389, and 395-417; these read HRCA…ARIH, HQCG…LQTH, FKCP…QRTH, YACG…RRSH, HACA…QRIH, FACP…RRTH, YRCE…RRNH, HKCP…RKTH, and AECA…QRAH.

It belongs to the krueppel C2H2-type zinc-finger protein family.

The protein resides in the nucleus. In terms of biological role, may be involved in transcriptional regulation. This Homo sapiens (Human) protein is Zinc finger protein 672.